We begin with the raw amino-acid sequence, 104 residues long: Large ribosomal subunit protein uL24 (104 aa).

The protein belongs to the universal ribosomal protein uL24 family. As to quaternary structure, part of the 50S ribosomal subunit.

Its function is as follows. One of two assembly initiator proteins, it binds directly to the 5'-end of the 23S rRNA, where it nucleates assembly of the 50S subunit. In terms of biological role, one of the proteins that surrounds the polypeptide exit tunnel on the outside of the subunit. The chain is Large ribosomal subunit protein uL24 from Bartonella tribocorum (strain CIP 105476 / IBS 506).